The following is a 430-amino-acid chain: Synaptotagmin-11 (430 aa).

At M1 to P15 the chain is on the vesicular side. A helical transmembrane segment spans residues V16 to V36. The Cytoplasmic portion of the chain corresponds to W37–Y430. The tract at residues R132–D154 is disordered. S133 bears the Phosphoserine mark. The segment covering P140–S150 has biased composition (low complexity). C2 domains lie at M156–R278 and S290–H425. Ca(2+)-binding residues include D249, S252, and D255.

This sequence belongs to the synaptotagmin family. Homodimer. Can also form heterodimers. Interacts with PRKN. Interacts (via C2 2 domain) with AGO2 and SND1; the interaction with SND1 is direct. Interacts with KIF1A; the interaction increases in presence of calcium. The cofactor is Ca(2+). Post-translationally, ubiquitinated, at least by PRKN, and targeted to the proteasome complex for degradation. Ubiquitination is inhibited by ATP13A2. Highly expressed in brain and at lower levels in other tissues.

The protein localises to the cytoplasmic vesicle membrane. Its subcellular location is the perikaryon. The protein resides in the golgi apparatus. It localises to the trans-Golgi network membrane. It is found in the recycling endosome membrane. The protein localises to the lysosome membrane. Its subcellular location is the cytoplasmic vesicle. The protein resides in the phagosome. It localises to the cell projection. It is found in the axon. The protein localises to the dendrite. Its subcellular location is the postsynaptic density. The protein resides in the clathrin-coated vesicle membrane. Functionally, synaptotagmin family member involved in vesicular and membrane trafficking which does not bind Ca(2+). Inhibits clathrin-mediated and bulk endocytosis in neurons, functions to ensure precision in vesicle retrieval. Plays an important role in dopamine transmission by regulating endocytosis and the vesicle-recycling process. Essential component of a neuronal vesicular trafficking pathway that differs from the synaptic vesicle trafficking pathway but is crucial for development and synaptic plasticity. In macrophages and microglia, inhibits the conventional cytokine secretion, of at least IL6 and TNF, and phagocytosis. In astrocytes, regulates lysosome exocytosis, mechanism required for the repair of injured astrocyte cell membrane. Required for the ATP13A2-mediated regulation of the autophagy-lysosome pathway. The polypeptide is Synaptotagmin-11 (Rattus norvegicus (Rat)).